The chain runs to 152 residues: Ribosome maturation factor RimP (152 aa).

This sequence belongs to the RimP family.

It is found in the cytoplasm. Functionally, required for maturation of 30S ribosomal subunits. The polypeptide is Ribosome maturation factor RimP (Brevibacillus brevis (strain 47 / JCM 6285 / NBRC 100599)).